The primary structure comprises 147 residues: Cyanate hydratase (147 aa).

Residues Arg-88, Glu-91, and Ser-114 contribute to the active site.

It belongs to the cyanase family.

It catalyses the reaction cyanate + hydrogencarbonate + 3 H(+) = NH4(+) + 2 CO2. Its function is as follows. Catalyzes the reaction of cyanate with bicarbonate to produce ammonia and carbon dioxide. This chain is Cyanate hydratase, found in Ralstonia pickettii (strain 12J).